A 188-amino-acid chain; its full sequence is 3-deoxy-D-manno-octulosonate 8-phosphate phosphatase KdsC (188 aa).

Mg(2+) contacts are provided by aspartate 32 and aspartate 34. Substrate contacts are provided by residues aspartate 34, 55-59 (NVRDG), arginine 63, arginine 78, arginine 86, and lysine 102. Position 125 (aspartate 125) interacts with Mg(2+).

In terms of assembly, homotetramer. Requires Mg(2+) as cofactor. The cofactor is Co(2+).

It carries out the reaction 3-deoxy-alpha-D-manno-2-octulosonate-8-phosphate + H2O = 3-deoxy-alpha-D-manno-oct-2-ulosonate + phosphate. It participates in carbohydrate biosynthesis; 3-deoxy-D-manno-octulosonate biosynthesis; 3-deoxy-D-manno-octulosonate from D-ribulose 5-phosphate: step 3/3. The protein operates within bacterial outer membrane biogenesis; lipopolysaccharide biosynthesis. With respect to regulation, inhibited by calcium, cadmium, mercury, and copper ions. In terms of biological role, catalyzes the hydrolysis of 3-deoxy-D-manno-octulosonate 8-phosphate (KDO 8-P) to 3-deoxy-D-manno-octulosonate (KDO) and inorganic phosphate. The sequence is that of 3-deoxy-D-manno-octulosonate 8-phosphate phosphatase KdsC from Escherichia coli (strain B / BL21-DE3).